Reading from the N-terminus, the 124-residue chain is Small ribosomal subunit protein uS12 (124 aa).

The segment at 1 to 25 is disordered; that stretch reads MARINQLVRKPRRARAKKSDVPALE. 3-methylthioaspartic acid is present on Asp89. Positions 103–124 are disordered; sequence DTAGVSGRRRGRSKYGEKKPKE.

Belongs to the universal ribosomal protein uS12 family. As to quaternary structure, part of the 30S ribosomal subunit. Contacts proteins S8 and S17. May interact with IF1 in the 30S initiation complex.

With S4 and S5 plays an important role in translational accuracy. Its function is as follows. Interacts with and stabilizes bases of the 16S rRNA that are involved in tRNA selection in the A site and with the mRNA backbone. Located at the interface of the 30S and 50S subunits, it traverses the body of the 30S subunit contacting proteins on the other side and probably holding the rRNA structure together. The combined cluster of proteins S8, S12 and S17 appears to hold together the shoulder and platform of the 30S subunit. In Coxiella burnetii (strain Dugway 5J108-111), this protein is Small ribosomal subunit protein uS12.